The sequence spans 698 residues: Capon-like protein (698 aa).

The PID domain occupies 25–194 (FFHGITFQAK…SELLDVEQIS (170 aa)). The segment at 191–240 (EQISEQQLSEDGERGGGDNETPKKEHLAITPDLNHTQPQRPNHLDIMPSH) is disordered. The span at 201 to 217 (DGERGGGDNETPKKEHL) shows a compositional bias: basic and acidic residues. 3 coiled-coil regions span residues 265 to 327 (RSEI…LASL), 379 to 484 (NQQL…LNAN), and 554 to 583 (LNED…GNLA). The span at 396 to 423 (SQHLQNLQQQQQQQQQQQQQQTQAAPTA) shows a compositional bias: low complexity. The interval 396–460 (SQHLQNLQQQ…QQQQQQQQDA (65 aa)) is disordered. Over residues 436 to 447 (YPSMSALQSISN) the composition is skewed to polar residues. Over residues 448–458 (QLQQQQQQQQQ) the composition is skewed to low complexity. Residues 588–698 (GGSTSTRDTS…RTTWARHTTK (111 aa)) are disordered. The segment covering 590-640 (STSTRDTSRSSSTLDSPSSPRLRSSNNNISPGSSNGNQNHNNNSNSNSSSS) has biased composition (low complexity). 2 stretches are compositionally biased toward polar residues: residues 662–672 (LSATPSFITRS) and 679–698 (NRSQ…HTTK).

As to expression, expressed at higher level in wing imaginal disk.

In terms of biological role, putative adapter protein. The sequence is that of Capon-like protein from Drosophila melanogaster (Fruit fly).